A 109-amino-acid chain; its full sequence is CRISPR-associated endoribonuclease Cas2 (109 aa).

Asp-8 contributes to the Mg(2+) binding site.

This sequence belongs to the CRISPR-associated endoribonuclease Cas2 protein family. In terms of assembly, homodimer, forms a heterotetramer with a Cas1 homodimer. Mg(2+) is required as a cofactor.

In terms of biological role, CRISPR (clustered regularly interspaced short palindromic repeat), is an adaptive immune system that provides protection against mobile genetic elements (viruses, transposable elements and conjugative plasmids). CRISPR clusters contain sequences complementary to antecedent mobile elements and target invading nucleic acids. CRISPR clusters are transcribed and processed into CRISPR RNA (crRNA). Functions as a ssRNA-specific endoribonuclease. Involved in the integration of spacer DNA into the CRISPR cassette. The chain is CRISPR-associated endoribonuclease Cas2 from Streptococcus mutans serotype c (strain ATCC 700610 / UA159).